The chain runs to 231 residues: Large ribosomal subunit protein uL1 (231 aa).

The protein belongs to the universal ribosomal protein uL1 family. In terms of assembly, part of the 50S ribosomal subunit.

In terms of biological role, binds directly to 23S rRNA. The L1 stalk is quite mobile in the ribosome, and is involved in E site tRNA release. Its function is as follows. Protein L1 is also a translational repressor protein, it controls the translation of the L11 operon by binding to its mRNA. This is Large ribosomal subunit protein uL1 from Allorhizobium ampelinum (strain ATCC BAA-846 / DSM 112012 / S4) (Agrobacterium vitis (strain S4)).